The primary structure comprises 295 residues: (R)-phenoxypropionate/alpha-ketoglutarate-dioxygenase (295 aa).

Positions 111 and 113 each coordinate Fe cation. Positions 138 and 255 each coordinate 2-oxoglutarate. H270 provides a ligand contact to Fe cation. Residue R281 coordinates 2-oxoglutarate.

Belongs to the TfdA dioxygenase family. In terms of assembly, homotrimer. The cofactor is Fe cation. L-ascorbate is required as a cofactor.

It carries out the reaction (R)-2-(4-chloro-2-methylphenoxy)propanoate + 2-oxoglutarate + O2 = 2-methyl-4-chlorophenol + pyruvate + succinate + CO2. It catalyses the reaction (R)-(2,4-dichlorophenoxy)propanoate + 2-oxoglutarate + O2 = 2,4-dichlorophenol + pyruvate + succinate + CO2. Its pathway is xenobiotic degradation; 2-(2,4-dichlorophenoxy)propanoate degradation. Inhibited by divalent cations, most significantly by copper and nickel, and by diethylpyrocarbonate (DEPC). Involved in the degradation of the phenoxypropionate herbicides. Catalyzes the enantiospecific cleavage of the ether bond in the herbicid R-dichlorprop ((R)-2-(2,4-dichlorophenoxy)propionate)(R-2,4-DP) and R-mecoprop ((R)-2-(4-chloro-2-methylphenoxy)propionate)(R-2,4-MCPP). It can also accept (RS)-2-(2,4,5-trichlorophenoxy)propionate, (RS)-2-(4-chlorophenoxy)propionate, (RS)-2-(m-chlorophenoxy)propionate, however it can only accept 2-oxoglutarate as oxygen acceptor. In Delftia acidovorans (Pseudomonas acidovorans), this protein is (R)-phenoxypropionate/alpha-ketoglutarate-dioxygenase.